The following is a 562-amino-acid chain: Potassium-transporting ATPase potassium-binding subunit (562 aa).

Transmembrane regions (helical) follow at residues 5–25, 65–85, 135–155, 181–201, 257–277, 283–303, 331–351, 358–378, 381–401, 422–442, 486–506, and 528–548; these read GILAIFLVVLALVACAWPLGG, AYLRAMMVSNLVMALFAYAVF, IGITFLQFTSAATGLAAAMAF, LLLPIAAILAVLLLALGVPET, ILEIMGMGLIPTALVFTAGHF, LAIVLCTLLGAILLAGAYIVY, FGLPLTSLFVAATTAYTTGAV, LMPLSGMVPLLFMMFNLIFGG, VGLLNILMFLIIAVFISGLMV, AAMLVHPFVILVPTAIAMALP, ISIGLVMLFGRYVSIIAMLAI, and FAFGYVFVAVFIIVGALTFFP.

This sequence belongs to the KdpA family. In terms of assembly, the system is composed of three essential subunits: KdpA, KdpB and KdpC.

The protein resides in the cell membrane. Part of the high-affinity ATP-driven potassium transport (or Kdp) system, which catalyzes the hydrolysis of ATP coupled with the electrogenic transport of potassium into the cytoplasm. This subunit binds the extracellular potassium ions and delivers the ions to the membrane domain of KdpB through an intramembrane tunnel. This chain is Potassium-transporting ATPase potassium-binding subunit, found in Alicyclobacillus acidocaldarius subsp. acidocaldarius (strain ATCC 27009 / DSM 446 / BCRC 14685 / JCM 5260 / KCTC 1825 / NBRC 15652 / NCIMB 11725 / NRRL B-14509 / 104-IA) (Bacillus acidocaldarius).